An 84-amino-acid polypeptide reads, in one-letter code: Succinate dehydrogenase membrane anchor subunit (84 aa).

Residues 1–3 are Mitochondrial matrix-facing; it reads MIT. A helical membrane pass occupies residues 4-24; the sequence is FQWLIVRVVALFISLTILIDI. The Mitochondrial intermembrane portion of the chain corresponds to 25-31; the sequence is EMFVVML. Residues 32 to 52 traverse the membrane as a helical segment; sequence SFLIIHISIGLKAIIHDYIHF. His-37 is a binding site for heme. Tyr-49 is an a ubiquinone binding site. Residues 53-58 are Mitochondrial matrix-facing; the sequence is QKIKLM. Residues 59–81 traverse the membrane as a helical segment; it reads LLILLRVSAIEISRSFRTFYIII. Residues 82-84 lie on the Mitochondrial intermembrane side of the membrane; that stretch reads KNT.

Part of an enzyme complex containing four subunits: a flavoprotein, an iron-sulfur protein, plus two membrane-anchoring proteins. Heme is required as a cofactor.

It is found in the mitochondrion inner membrane. The protein operates within carbohydrate metabolism; tricarboxylic acid cycle. Membrane-anchoring subunit of succinate dehydrogenase (SDH). The chain is Succinate dehydrogenase membrane anchor subunit (SDH4) from Chondrus crispus (Carrageen Irish moss).